Consider the following 172-residue polypeptide: Large ribosomal subunit protein uL10 (172 aa).

This sequence belongs to the universal ribosomal protein uL10 family. Part of the ribosomal stalk of the 50S ribosomal subunit. The N-terminus interacts with L11 and the large rRNA to form the base of the stalk. The C-terminus forms an elongated spine to which L12 dimers bind in a sequential fashion forming a multimeric L10(L12)X complex.

Forms part of the ribosomal stalk, playing a central role in the interaction of the ribosome with GTP-bound translation factors. This is Large ribosomal subunit protein uL10 from Chlorobium chlorochromatii (strain CaD3).